The sequence spans 390 residues: 2-deoxy-scyllo-inosose synthase (390 aa).

NAD(+) is bound by residues Asp-42, 73–76 (EQNK), 105–109 (GVTGN), 129–130 (TT), 140–142 (SLK), and 151–152 (KN). Lys-142 is a catalytic residue. Residue Glu-184 participates in Co(2+) binding. Glu-244 is a catalytic residue. His-247 and His-263 together coordinate Co(2+). The segment at 371–390 (PPRPAAARTDDAATVLGGAG) is disordered.

Belongs to the sugar phosphate cyclases superfamily. DOI synthase family. Requires NAD(+) as cofactor. It depends on Co(2+) as a cofactor.

It carries out the reaction D-glucose 6-phosphate = 2-deoxy-L-scyllo-inosose + phosphate. It participates in metabolic intermediate biosynthesis; 2-deoxystreptamine biosynthesis; 2-deoxystreptamine from D-glucose 6-phosphate: step 1/4. Its pathway is antibiotic biosynthesis; kanamycin biosynthesis. Catalyzes the intramolecular carbocycle formation from D-glucose-6-phosphate to 2-deoxy-scyllo-inosose (DOI). The chain is 2-deoxy-scyllo-inosose synthase (kanC) from Streptomyces kanamyceticus.